A 160-amino-acid chain; its full sequence is Sec-independent protein translocase protein TatB (160 aa).

A helical membrane pass occupies residues 1 to 21; it reads MIDLGVSKIALIGAVALIVIG. Disordered stretches follow at residues 70–100 and 133–160; these read ARDV…STAT and RSGV…SSSF. Polar residues predominate over residues 89–100; the sequence is SDATGSDASTAT.

Belongs to the TatB family. The Tat system comprises two distinct complexes: a TatABC complex, containing multiple copies of TatA, TatB and TatC subunits, and a separate TatA complex, containing only TatA subunits. Substrates initially bind to the TatABC complex, which probably triggers association of the separate TatA complex to form the active translocon.

It localises to the cell inner membrane. In terms of biological role, part of the twin-arginine translocation (Tat) system that transports large folded proteins containing a characteristic twin-arginine motif in their signal peptide across membranes. Together with TatC, TatB is part of a receptor directly interacting with Tat signal peptides. TatB may form an oligomeric binding site that transiently accommodates folded Tat precursor proteins before their translocation. This is Sec-independent protein translocase protein TatB from Polaromonas sp. (strain JS666 / ATCC BAA-500).